Reading from the N-terminus, the 70-residue chain is Plasticin-S1 (70 aa).

An N-terminal signal peptide occupies residues 1-22; it reads MAFLKKSLFLVLFLALVPLSIC. Positions 23-45 are excised as a propeptide; the sequence is EEEKREGENEKEQEDDNQSEEKR. Residues 25–45 are disordered; that stretch reads EKREGENEKEQEDDNQSEEKR.

This sequence belongs to the frog skin active peptide (FSAP) family. Plasticin subfamily. Expressed by the skin glands.

The protein localises to the secreted. Functionally, the native peptide is a cationic amphipathic alpha-helical antimicrobial peptide with potent activity against both Gram-positive and Gram-negative bacteria. It has weak activity against fungi and shows low hemolytic activity. This Phyllomedusa sauvagei (Sauvage's leaf frog) protein is Plasticin-S1.